Here is a 58-residue protein sequence, read N- to C-terminus: Large ribosomal subunit protein eL24 (58 aa).

Residues cysteine 6, cysteine 9, cysteine 32, and cysteine 36 each contribute to the Zn(2+) site. The C4-type zinc-finger motif lies at 6–36; sequence CAFCGADILPGYGIMYVKTDGTTLRFCSRKC.

It belongs to the eukaryotic ribosomal protein eL24 family. As to quaternary structure, part of the 50S ribosomal subunit. Forms a cluster with proteins L3 and L14. Zn(2+) serves as cofactor.

In terms of biological role, binds to the 23S rRNA. In Pyrobaculum islandicum (strain DSM 4184 / JCM 9189 / GEO3), this protein is Large ribosomal subunit protein eL24.